The primary structure comprises 212 residues: Interleukin-6 (212 aa).

The first 29 residues, 1–29, serve as a signal peptide directing secretion; it reads MNSLSTSAFSPVAFSLGLLLVMATAFPTP. C72 and C78 are oxidised to a cystine. The residue at position 81 (S81) is a Phosphoserine. A disulfide bond links C101 and C111. Residues 156 to 175 form a disordered region; the sequence is QKGKNPDKATTPNPTTNAGL. Residues 163-175 show a composition bias toward polar residues; sequence KATTPNPTTNAGL.

The protein belongs to the IL-6 superfamily. In terms of assembly, component of a hexamer of two molecules each of IL6, IL6R and IL6ST; first binds to IL6R to associate with the signaling subunit IL6ST. Interacts with IL6R (via the N-terminal ectodomain); this interaction may be affected by IL6R-binding with SORL1, hence decreasing IL6 cis signaling. Interacts with SORL1 (via the N-terminal ectodomain); this interaction leads to IL6 internalization and lysosomal degradation. May form a trimeric complex with the soluble SORL1 ectodomain and soluble IL6R receptor; this interaction might stabilize circulating IL6, hence promoting IL6 trans signaling.

The protein localises to the secreted. In terms of biological role, cytokine with a wide variety of biological functions in immunity, tissue regeneration, and metabolism. Binds to IL6R, then the complex associates to the signaling subunit IL6ST/gp130 to trigger the intracellular IL6-signaling pathway. The interaction with the membrane-bound IL6R and IL6ST stimulates 'classic signaling', whereas the binding of IL6 and soluble IL6R to IL6ST stimulates 'trans-signaling'. Alternatively, 'cluster signaling' occurs when membrane-bound IL6:IL6R complexes on transmitter cells activate IL6ST receptors on neighboring receiver cells. IL6 is a potent inducer of the acute phase response. Rapid production of IL6 contributes to host defense during infection and tissue injury, but excessive IL6 synthesis is involved in disease pathology. In the innate immune response, is synthesized by myeloid cells, such as macrophages and dendritic cells, upon recognition of pathogens through toll-like receptors (TLRs) at the site of infection or tissue injury. In the adaptive immune response, is required for the differentiation of B cells into immunoglobulin-secreting cells. Plays a major role in the differentiation of CD4(+) T cell subsets. Essential factor for the development of T follicular helper (Tfh) cells that are required for the induction of germinal-center formation. Required to drive naive CD4(+) T cells to the Th17 lineage. Also required for proliferation of myeloma cells and the survival of plasmablast cells. Its function is as follows. Acts as an essential factor in bone homeostasis and on vessels directly or indirectly by induction of VEGF, resulting in increased angiogenesis activity and vascular permeability. Induces, through 'trans-signaling' and synergistically with IL1B and TNF, the production of VEGF. Involved in metabolic controls, is discharged into the bloodstream after muscle contraction increasing lipolysis and improving insulin resistance. 'Trans-signaling' in central nervous system also regulates energy and glucose homeostasis. Mediates, through GLP-1, crosstalk between insulin-sensitive tissues, intestinal L cells and pancreatic islets to adapt to changes in insulin demand. Also acts as a myokine. Plays a protective role during liver injury, being required for maintenance of tissue regeneration. Also has a pivotal role in iron metabolism by regulating HAMP/hepcidin expression upon inflammation or bacterial infection. Through activation of IL6ST-YAP-NOTCH pathway, induces inflammation-induced epithelial regeneration. The protein is Interleukin-6 (IL6) of Sus scrofa (Pig).